A 177-amino-acid chain; its full sequence is Large ribosomal subunit protein uL6 (177 aa).

This sequence belongs to the universal ribosomal protein uL6 family. In terms of assembly, part of the 50S ribosomal subunit.

Functionally, this protein binds to the 23S rRNA, and is important in its secondary structure. It is located near the subunit interface in the base of the L7/L12 stalk, and near the tRNA binding site of the peptidyltransferase center. In Photobacterium profundum (strain SS9), this protein is Large ribosomal subunit protein uL6.